The sequence spans 776 residues: V-set and immunoglobulin domain-containing protein 10-like 2 (776 aa).

The signal sequence occupies residues 1-28 (MVGLSAHHRPLGCRLLILFCLLHPGASG). Ig-like domains are found at residues 32 to 140 (PTSN…LYLM), 150 to 234 (PRVQ…AFLD), 242 to 324 (PVIT…TTVQ), 399 to 498 (PTLA…LRLE), and 500 to 592 (PQLT…VLLE). Cystine bridges form between C56/C122, C169/C217, C268/C308, C435/C480, and C521/C576. The region spanning 608-708 (TPPNVTISRL…EVKTPVDPAF (101 aa)) is the Fibronectin type-III domain. 2 N-linked (GlcNAc...) asparagine glycosylation sites follow: N611 and N637. A helical transmembrane segment spans residues 713 to 733 (AVLGAAGTGVVVALATSLLVF).

It localises to the membrane. The sequence is that of V-set and immunoglobulin domain-containing protein 10-like 2 from Mus musculus (Mouse).